A 582-amino-acid polypeptide reads, in one-letter code: mRNA-decapping enzyme 1A (582 aa).

A Phosphoserine modification is found at Ser62. A compositionally biased stretch (basic and acidic residues) spans 132–141 (RSQQAARDKQ). 2 disordered regions span residues 132-154 (RSQQ…DHRP) and 172-214 (QMGD…PSGH). Residues Ser142, Ser179, Ser180, Ser315, Ser319, and Ser334 each carry the phosphoserine modification. Polar residues predominate over residues 173 to 196 (MGDSNISSPGLQPSTQLSNLGSTE). Residue Thr348 is modified to Phosphothreonine. Position 353 is a phosphoserine (Ser353). Arg376 is subject to Asymmetric dimethylarginine. Thr401 is subject to Phosphothreonine. Residues Ser422, Ser522, Ser523, and Ser525 each carry the phosphoserine modification. The interval 513-536 (RSSDLERKASSPSPLTIGTPESQR) is disordered. The segment covering 522-533 (SSPSPLTIGTPE) has biased composition (polar residues). Phosphothreonine occurs at positions 528 and 531.

This sequence belongs to the DCP1 family. (Microbial infection) Interacts with rotavirus A non-structural protein 2; this interaction probably plays a role in the sequestration of DCP1A in viral factories. Interacts with rotavirus A non-structural protein 5; this interaction probably plays a role in its sequestration in viral factories. In terms of assembly, forms a complex with EDC3, DCP2, DDX6 and EDC4/HEDLS, within this complex directly interacts with EDC3. Part of a cytoplasmic complex containing proteins involved in mRNA decay, including XRN1 and LSM1. Interacts with DCP1B. Interacts with DCP2. Interacts with DDX17 in an RNA-independent manner. Interacts with PNRC2. Interacts with SMAD4. Interacts with UPF1. Interacts with ZC3HAV1. Interacts with ZFP36L1. Interacts with NBDY. Interacts with DHX34; the interaction is RNA-independent. As to expression, detected in heart, brain, placenta, lung, skeletal muscle, liver, kidney and pancreas.

The protein localises to the cytoplasm. Its subcellular location is the P-body. It is found in the nucleus. It catalyses the reaction a 5'-end (N(7)-methyl 5'-triphosphoguanosine)-ribonucleoside in mRNA + H2O = N(7)-methyl-GDP + a 5'-end phospho-ribonucleoside in mRNA + 2 H(+). Its function is as follows. Necessary for the degradation of mRNAs, both in normal mRNA turnover and in nonsense-mediated mRNA decay. Removes the 7-methyl guanine cap structure from mRNA molecules, yielding a 5'-phosphorylated mRNA fragment and 7m-GDP. Contributes to the transactivation of target genes after stimulation by TGFB1. Essential for embryonic development. The polypeptide is mRNA-decapping enzyme 1A (DCP1A) (Homo sapiens (Human)).